The primary structure comprises 383 residues: S-adenosylmethionine:tRNA ribosyltransferase-isomerase (383 aa).

Belongs to the QueA family. Monomer.

The protein resides in the cytoplasm. It catalyses the reaction 7-aminomethyl-7-carbaguanosine(34) in tRNA + S-adenosyl-L-methionine = epoxyqueuosine(34) in tRNA + adenine + L-methionine + 2 H(+). Its pathway is tRNA modification; tRNA-queuosine biosynthesis. Its function is as follows. Transfers and isomerizes the ribose moiety from AdoMet to the 7-aminomethyl group of 7-deazaguanine (preQ1-tRNA) to give epoxyqueuosine (oQ-tRNA). The chain is S-adenosylmethionine:tRNA ribosyltransferase-isomerase from Rickettsia prowazekii (strain Madrid E).